The sequence spans 274 residues: 2-succinyl-6-hydroxy-2,4-cyclohexadiene-1-carboxylate synthase (274 aa).

The protein belongs to the AB hydrolase superfamily. MenH family. Monomer.

It catalyses the reaction 5-enolpyruvoyl-6-hydroxy-2-succinyl-cyclohex-3-ene-1-carboxylate = (1R,6R)-6-hydroxy-2-succinyl-cyclohexa-2,4-diene-1-carboxylate + pyruvate. Its pathway is quinol/quinone metabolism; 1,4-dihydroxy-2-naphthoate biosynthesis; 1,4-dihydroxy-2-naphthoate from chorismate: step 3/7. The protein operates within quinol/quinone metabolism; menaquinone biosynthesis. Its function is as follows. Catalyzes a proton abstraction reaction that results in 2,5-elimination of pyruvate from 2-succinyl-5-enolpyruvyl-6-hydroxy-3-cyclohexene-1-carboxylate (SEPHCHC) and the formation of 2-succinyl-6-hydroxy-2,4-cyclohexadiene-1-carboxylate (SHCHC). This Yersinia enterocolitica serotype O:8 / biotype 1B (strain NCTC 13174 / 8081) protein is 2-succinyl-6-hydroxy-2,4-cyclohexadiene-1-carboxylate synthase.